A 333-amino-acid chain; its full sequence is Phosphoribosylformylglycinamidine cyclo-ligase (333 aa).

The protein belongs to the AIR synthase family.

The protein localises to the cytoplasm. It catalyses the reaction 2-formamido-N(1)-(5-O-phospho-beta-D-ribosyl)acetamidine + ATP = 5-amino-1-(5-phospho-beta-D-ribosyl)imidazole + ADP + phosphate + H(+). It participates in purine metabolism; IMP biosynthesis via de novo pathway; 5-amino-1-(5-phospho-D-ribosyl)imidazole from N(2)-formyl-N(1)-(5-phospho-D-ribosyl)glycinamide: step 2/2. The protein is Phosphoribosylformylglycinamidine cyclo-ligase of Methanococcoides burtonii (strain DSM 6242 / NBRC 107633 / OCM 468 / ACE-M).